Consider the following 196-residue polypeptide: uncharacterized protein (196 aa).

The segment at 44–80 is disordered; that stretch reads RSVAVPGTEGKKAQNLRQLPAARLTYPTSSSTRPSHA.

This is an uncharacterized protein from Treponema pallidum (strain Nichols).